We begin with the raw amino-acid sequence, 648 residues long: Biosynthetic arginine decarboxylase (648 aa).

The residue at position 109 (Lys-109) is an N6-(pyridoxal phosphate)lysine. Residue 291–301 (LDVGGGLGVDY) coordinates substrate.

This sequence belongs to the Orn/Lys/Arg decarboxylase class-II family. SpeA subfamily. Mg(2+) is required as a cofactor. Pyridoxal 5'-phosphate serves as cofactor.

It carries out the reaction L-arginine + H(+) = agmatine + CO2. In terms of biological role, catalyzes the biosynthesis of agmatine from arginine. This chain is Biosynthetic arginine decarboxylase, found in Prochlorococcus marinus (strain MIT 9313).